The sequence spans 127 residues: Aspartate 1-decarboxylase (127 aa).

The Schiff-base intermediate with substrate; via pyruvic acid role is filled by serine 25. A Pyruvic acid (Ser) modification is found at serine 25. Threonine 57 contacts substrate. The Proton donor role is filled by tyrosine 58. Glycine 73–alanine 75 lines the substrate pocket.

Belongs to the PanD family. Heterooctamer of four alpha and four beta subunits. Pyruvate serves as cofactor. Post-translationally, is synthesized initially as an inactive proenzyme, which is activated by self-cleavage at a specific serine bond to produce a beta-subunit with a hydroxyl group at its C-terminus and an alpha-subunit with a pyruvoyl group at its N-terminus.

It localises to the cytoplasm. It catalyses the reaction L-aspartate + H(+) = beta-alanine + CO2. The protein operates within cofactor biosynthesis; (R)-pantothenate biosynthesis; beta-alanine from L-aspartate: step 1/1. Catalyzes the pyruvoyl-dependent decarboxylation of aspartate to produce beta-alanine. The sequence is that of Aspartate 1-decarboxylase from Neisseria meningitidis serogroup C / serotype 2a (strain ATCC 700532 / DSM 15464 / FAM18).